Consider the following 339-residue polypeptide: Phosphatidylglycerol--prolipoprotein diacylglyceryl transferase (339 aa).

Transmembrane regions (helical) follow at residues 43-63 (FTIA…YWLG), 81-101 (ILWM…LTSW), and 121-141 (NGGI…IYFA). Arg167 is a binding site for a 1,2-diacyl-sn-glycero-3-phospho-(1'-sn-glycerol). The next 2 membrane-spanning stretches (helical) occupy residues 231–251 (FTQL…YFWL) and 300–320 (LWTD…WMLW).

The protein belongs to the Lgt family.

Its subcellular location is the cell membrane. The enzyme catalyses L-cysteinyl-[prolipoprotein] + a 1,2-diacyl-sn-glycero-3-phospho-(1'-sn-glycerol) = an S-1,2-diacyl-sn-glyceryl-L-cysteinyl-[prolipoprotein] + sn-glycerol 1-phosphate + H(+). It participates in protein modification; lipoprotein biosynthesis (diacylglyceryl transfer). In terms of biological role, catalyzes the transfer of the diacylglyceryl group from phosphatidylglycerol to the sulfhydryl group of the N-terminal cysteine of a prolipoprotein, the first step in the formation of mature lipoproteins. This Deinococcus radiodurans (strain ATCC 13939 / DSM 20539 / JCM 16871 / CCUG 27074 / LMG 4051 / NBRC 15346 / NCIMB 9279 / VKM B-1422 / R1) protein is Phosphatidylglycerol--prolipoprotein diacylglyceryl transferase.